The following is a 154-amino-acid chain: 6,7-dimethyl-8-ribityllumazine synthase (154 aa).

5-amino-6-(D-ribitylamino)uracil is bound by residues Phe-22, 56–58, and 80–82; these read AFE and AVI. 85–86 lines the (2S)-2-hydroxy-3-oxobutyl phosphate pocket; the sequence is AT. The active-site Proton donor is the His-88. Phe-113 provides a ligand contact to 5-amino-6-(D-ribitylamino)uracil. A (2S)-2-hydroxy-3-oxobutyl phosphate-binding site is contributed by Arg-127.

This sequence belongs to the DMRL synthase family.

The enzyme catalyses (2S)-2-hydroxy-3-oxobutyl phosphate + 5-amino-6-(D-ribitylamino)uracil = 6,7-dimethyl-8-(1-D-ribityl)lumazine + phosphate + 2 H2O + H(+). It participates in cofactor biosynthesis; riboflavin biosynthesis; riboflavin from 2-hydroxy-3-oxobutyl phosphate and 5-amino-6-(D-ribitylamino)uracil: step 1/2. Its function is as follows. Catalyzes the formation of 6,7-dimethyl-8-ribityllumazine by condensation of 5-amino-6-(D-ribitylamino)uracil with 3,4-dihydroxy-2-butanone 4-phosphate. This is the penultimate step in the biosynthesis of riboflavin. The sequence is that of 6,7-dimethyl-8-ribityllumazine synthase from Clostridium botulinum (strain 657 / Type Ba4).